The following is a 335-amino-acid chain: Cut9-interacting protein scn1 (335 aa).

The protein belongs to the metallo-dependent hydrolases superfamily.

Its function is as follows. Interacts with cut9. This Schizosaccharomyces pombe (strain 972 / ATCC 24843) (Fission yeast) protein is Cut9-interacting protein scn1 (scn1).